Here is a 271-residue protein sequence, read N- to C-terminus: Mannosyl-3-phosphoglycerate phosphatase (271 aa).

Asp13 serves as the catalytic Nucleophile. Residues Asp13, Asp15, and Asp214 each coordinate Mg(2+).

Belongs to the HAD-like hydrolase superfamily. MPGP family. The cofactor is Mg(2+).

The protein localises to the cytoplasm. It catalyses the reaction 2-O-(alpha-D-mannosyl)-3-phosphoglycerate + H2O = (2R)-2-O-(alpha-D-mannosyl)-glycerate + phosphate. The polypeptide is Mannosyl-3-phosphoglycerate phosphatase (Escherichia coli (strain K12 / DH10B)).